Here is a 479-residue protein sequence, read N- to C-terminus: Serine carboxypeptidase-like 29 (479 aa).

The first 28 residues, 1–28 (MAKTRGSCCLVNALIAIAFLATAHLCEA), serve as a signal peptide directing secretion. N-linked (GlcNAc...) asparagine glycosylation is found at asparagine 47 and asparagine 144. Cystine bridges form between cysteine 93–cysteine 349, cysteine 254–cysteine 266, and cysteine 290–cysteine 317. Residue serine 186 is part of the active site. N-linked (GlcNAc...) asparagine glycosylation occurs at asparagine 293. Active-site residues include aspartate 386 and histidine 438.

Belongs to the peptidase S10 family. Expressed in seedlings, roots, leaves and flowers.

The protein resides in the secreted. Functionally, probable carboxypeptidase. The polypeptide is Serine carboxypeptidase-like 29 (SCPL29) (Arabidopsis thaliana (Mouse-ear cress)).